A 168-amino-acid polypeptide reads, in one-letter code: Lipoprotein signal peptidase (168 aa).

3 consecutive transmembrane segments (helical) span residues 8 to 28, 61 to 81, and 91 to 111; these read LYYL…WLVV, GQFW…VIYI, and FGIA…DRIF. Residues Asp-117 and Asp-135 contribute to the active site. The helical transmembrane segment at 128-148 threads the bilayer; it reads FPIFNVADAALTIGVALMFIY.

It belongs to the peptidase A8 family.

The protein resides in the cell membrane. The enzyme catalyses Release of signal peptides from bacterial membrane prolipoproteins. Hydrolyzes -Xaa-Yaa-Zaa-|-(S,diacylglyceryl)Cys-, in which Xaa is hydrophobic (preferably Leu), and Yaa (Ala or Ser) and Zaa (Gly or Ala) have small, neutral side chains.. It participates in protein modification; lipoprotein biosynthesis (signal peptide cleavage). In terms of biological role, this protein specifically catalyzes the removal of signal peptides from prolipoproteins. This is Lipoprotein signal peptidase from Anoxybacillus flavithermus (strain DSM 21510 / WK1).